Consider the following 329-residue polypeptide: Coiled-coil domain-containing protein 54 (329 aa).

A coiled-coil region spans residues asparagine 86–tyrosine 149. The span at threonine 178–serine 191 shows a compositional bias: polar residues. Residues threonine 178–serine 214 form a disordered region. Residue threonine 182 is modified to Phosphothreonine.

The protein is Coiled-coil domain-containing protein 54 (Ccdc54) of Mus musculus (Mouse).